Consider the following 428-residue polypeptide: Adenylosuccinate synthetase, chloroplastic (428 aa).

GTP-binding positions include 17-23 (GDEGKGK) and 45-47 (GHT). The Proton acceptor role is filled by Asp-18. 2 residues coordinate Mg(2+): Asp-18 and Gly-45. IMP is bound by residues 18-21 (DEGK), 43-46 (NAGH), Thr-135, Arg-149, Asn-226, Thr-241, and Arg-305. The active-site Proton donor is His-46. Substrate is bound at residue 301–307 (TTTGRPR). Residues Arg-307, 333-335 (KLD), and 416-418 (GVG) each bind GTP.

Belongs to the adenylosuccinate synthetase family. As to quaternary structure, homodimer. The cofactor is Mg(2+).

It localises to the plastid. The protein resides in the chloroplast. The enzyme catalyses IMP + L-aspartate + GTP = N(6)-(1,2-dicarboxyethyl)-AMP + GDP + phosphate + 2 H(+). The protein operates within purine metabolism; AMP biosynthesis via de novo pathway; AMP from IMP: step 1/2. Plays an important role in the de novo pathway and in the salvage pathway of purine nucleotide biosynthesis. Catalyzes the first committed step in the biosynthesis of AMP from IMP. In Ostreococcus lucimarinus (strain CCE9901), this protein is Adenylosuccinate synthetase, chloroplastic.